A 338-amino-acid polypeptide reads, in one-letter code: TPR repeat-containing protein MJ0941 (338 aa).

8 TPR repeats span residues 27–62 (LEAVANVLRAYRELFEGNLIKALYYVDKALELEPDF), 63–96 (YLALFLKGLALSAKGEIKEAITTFEELLSYESKN), 97–130 (PITWVFVGQLYGMSGNCDEALKCYNKALGIENRF), 131–164 (LSAFLLKTICLEFLGEYDELLKCYNEVLTYTPNF), 165–198 (VPMWVKKAEILRKLGRYEDALLCLNRALELKPHD), 199–232 (KNALYLKGVLLKRMGKFREALECFKKLIDELNVK), 268–301 (VALWYFKGELYERLGKLDEALKCYEKVIELQPHY), and 302–335 (IKALLSKARIYERQGNIEAAIEYYNKAVENIHKD).

This chain is TPR repeat-containing protein MJ0941, found in Methanocaldococcus jannaschii (strain ATCC 43067 / DSM 2661 / JAL-1 / JCM 10045 / NBRC 100440) (Methanococcus jannaschii).